We begin with the raw amino-acid sequence, 76 residues long: ATP synthase subunit 9, mitochondrial (76 aa).

Methionine 1 carries the N-formylmethionine modification. Helical transmembrane passes span 14–34 and 52–72; these read LASIGLVGAGIGIAIVFAALI and ILGFALSEATGLFALMIAFLL.

In terms of assembly, F-type ATP synthases have 2 components, the catalytic core F(1) and the membrane-embedded component F(0), linked together by a central stalk and a peripheral stalk. The central stalk, also called rotor shaft, is often seen as part of F(1). The peripheral stalk is seen as part of F(0). F(0) contains the membrane channel next to the rotor. F-type ATP synthases form dimers but each monomer functions independently in ATP generation. The dimer consists of 17 different polypeptides: ATP1 (subunit alpha, 3 molecules per monomer, part of F(1)), ATP2 (subunit beta, 3 copies per monomer, part of F(1)), ATP3 (subunit gamma, part of the central stalk), ATP4 (subunit b, part of the peripheral stalk), ATP5/OSCP (subunit 5/OSCP, part of the peripheral stalk), ATP6 (subunit a, part of the peripheral stalk), ATP7 (subunit d, part of the peripheral stalk), ATP8 (subunit 8, part of the peripheral stalk), OLI1 (subunit c, part of the rotor, 10 molecules per monomer), ATP14 (subunit h, part of the peripheral stalk), ATP15 (subunit epsilon, part of the central stalk), ATP16 (subunit delta, part of the central stalk), ATP17 (subunit f, part of the peripheral stalk), ATP18 (subunit i/j, part of the peripheral stalk), ATP19 (subunit k, dimer-specific, at interface between monomers), ATP20 (subunit g, at interface between monomers), TIM11 (subunit e, at interface between monomers).

The protein localises to the mitochondrion inner membrane. In terms of biological role, mitochondrial membrane ATP synthase (F(1)F(0) ATP synthase or Complex V) produces ATP from ADP in the presence of a proton gradient across the membrane which is generated by electron transport complexes of the respiratory chain. F-type ATP synthases consist of two structural domains, F(1) - containing the extramembraneous catalytic core, and F(0) - containing the membrane proton channel, linked together by a central stalk and a peripheral stalk. During catalysis, ATP synthesis in the catalytic domain of F(1) is coupled via a rotary mechanism of the central stalk subunits to proton translocation. Part of the complex F(0) domain. A homomeric c-ring of 10 OLI1/ATP9 subunits is part of the complex rotary element. In Yarrowia lipolytica (strain CLIB 122 / E 150) (Yeast), this protein is ATP synthase subunit 9, mitochondrial.